We begin with the raw amino-acid sequence, 125 residues long: Natriuretic peptide GNP1 (125 aa).

Positions 1–25 (MDPRLVRAGSLVLLLALLVQDQGAA) are cleaved as a signal peptide. Disordered regions lie at residues 23–78 (GAAH…PAFK) and 105–125 (VSGMGCNKFDPNKGSSSTGKK). Positions 26 to 85 (HPARAGQKYKPLIRRSEEDSQALGQEGDVAARAADEEEDAAGPGDALRQPAFKTLLASRE) are excised as a propeptide. Cysteines 94 and 110 form a disulfide.

This sequence belongs to the natriuretic peptide family. As to expression, expressed by the venom gland.

It localises to the secreted. In terms of biological role, exhibits natriuretic and vasodepressor activity. Acts by stimulating cGMP. This chain is Natriuretic peptide GNP1, found in Varanus varius (Lace monitor lizard).